We begin with the raw amino-acid sequence, 467 residues long: Ammonium transporter Rh type C (467 aa).

Topologically, residues 1-9 (MAWNTNLRW) are cytoplasmic. Residues 10–30 (RLPLLCLVLEVAMVVLFGLFV) form a helical membrane-spanning segment. Residues 31–61 (RYSPDADSSWSNEKRKGNITSDLENEFYYRY) are Extracellular-facing. N-linked (GlcNAc...) asparagine glycosylation is present at Asn48. The helical transmembrane segment at 62–82 (PSFQDVHVMVFLGFGFLMTFL) threads the bilayer. Residues 83–86 (QRYG) are Cytoplasmic-facing. Residues 87-107 (YCALGFNFLLAALGVQWALLM) traverse the membrane as a helical segment. Topologically, residues 108 to 131 (QGWFQYTKDRLILLGIKNLIDADS) are extracellular. 2 consecutive transmembrane segments (helical) span residues 132–152 (CVAS…PVQM) and 153–173 (LLMT…LLHV). At 174–179 (LEVKDA) the chain is on the extracellular side. A helical membrane pass occupies residues 180 to 200 (GGSITIHIFGAYFGLTVTWIL). Residues 201-219 (YRHNLDHSRERQSSVYHSN) lie on the Cytoplasmic side of the membrane. The helical transmembrane segment at 220–240 (LFAMIGTLFLWIYWPSFNSAM) threads the bilayer. Over 241–251 (SNYGDAQHRAA) the chain is Extracellular. Residues 252–272 (INTYCSLAASVLTSVAMSSVL) form a helical membrane-spanning segment. At 273–282 (HKKGKLDMVH) the chain is on the cytoplasmic side. The chain crosses the membrane as a helical span at residues 283–303 (IQNATLAGGVGVGTAAEMMLM). A topological domain (extracellular) is located at residue Pro304. The helical transmembrane segment at 305-325 (YGALIVGFICGAVSTLGFVYL) threads the bilayer. The Cytoplasmic segment spans residues 326–343 (TPFLESRLRIQDTCGIHN). Residues 344–364 (LHGIPGLIGAIVGAVTAAYAS) form a helical membrane-spanning segment. At 365–391 (PDGDRGFVYPFGFHNEKDEKVQGRFQA) the chain is on the extracellular side. The chain crosses the membrane as a helical span at residues 392–412 (FGLLLTLAIAMVGGTIMGLIL). At 413–467 (KLPFWGQAMDEDCFDDSIYWEMHEEKSSSPEDHTHKPSVPTEPVEQPTSSATLAP) the chain is on the cytoplasmic side. Over residues 436–447 (EEKSSSPEDHTH) the composition is skewed to basic and acidic residues. The interval 436–467 (EEKSSSPEDHTHKPSVPTEPVEQPTSSATLAP) is disordered. Residues 458–467 (QPTSSATLAP) are compositionally biased toward polar residues.

Belongs to the ammonium transporter (TC 2.A.49) family. Rh subfamily. Homotrimer. Post-translationally, N-glycosylated.

The protein resides in the cell membrane. The protein localises to the apical cell membrane. The catalysed reaction is NH4(+)(in) = NH4(+)(out). It carries out the reaction methylamine(out) = methylamine(in). The enzyme catalyses CO2(out) = CO2(in). Ammonium transporter involved in the maintenance of acid-base homeostasis. Transports ammonium and its related derivative methylammonium across the plasma membrane of epithelial cells likely contributing to renal transepithelial ammonia transport and ammonia metabolism. Postulated to primarily mediate an electroneutral bidirectional transport of NH3 ammonia species according to a mechanism that implies interaction of an NH4(+) ion with acidic residues of the pore entry followed by dissociation of NH4(+) into NH3 and H(+). As a result NH3 transits through the central pore and is protonated on the extracellular side reforming NH4(+). May act as a CO2 channel providing for renal acid secretion. The polypeptide is Ammonium transporter Rh type C (RHCG) (Oryctolagus cuniculus (Rabbit)).